Here is a 98-residue protein sequence, read N- to C-terminus: Hainantoxin-XVII.3 (98 aa).

An N-terminal signal peptide occupies residues 1-40 (MTTVGVSLFRRSPEKITMKIATFLGLSFLLIASYFLICEA). The propeptide occupies 41-64 (QHPGFQELLILEENMRDPENSKER). Cystine bridges form between Cys66/Cys81, Cys73/Cys85, and Cys80/Cys95.

Belongs to the hainantoxin family. 17 subfamily. As to expression, expressed by the venom gland.

The protein resides in the secreted. In terms of biological role, inhibits with low potency Kv1.2/KCNA2 and Kv1.3/KCNA3 voltage-gated potassium channels. In Cyriopagopus hainanus (Chinese bird spider), this protein is Hainantoxin-XVII.3.